Here is a 521-residue protein sequence, read N- to C-terminus: Histone deacetylase HDAC1 (521 aa).

Residues 7-319 form a histone deacetylase region; that stretch reads KRVCYYYDSD…WTYETSVALA (313 aa). The active site involves histidine 139. Residues 376 to 521 form a disordered region; that stretch reads GVQIQAIPED…GAKGAKENNI (146 aa). Residues 386 to 395 show a composition bias toward acidic residues; it reads AINDESDDED. Serine 391 carries the post-translational modification Phosphoserine. Residues 396 to 414 show a composition bias toward basic and acidic residues; it reads KVDKDDRLPQSDKDKRIVP. Residues serine 419, serine 421, and serine 455 each carry the phosphoserine modification. Threonine 457 is modified (phosphothreonine). Basic and acidic residues predominate over residues 459–470; it reads SEIKDEKEKGDG. A compositionally biased stretch (low complexity) spans 476–502; that stretch reads STASNTNSNNNSNNKSDNDAGATANAG. The span at 503–513 shows a compositional bias: gly residues; the sequence is SGSGSGSGAGA.

This sequence belongs to the histone deacetylase family. HD type 1 subfamily. In terms of assembly, component of a form of the Esc/E(z) complex present specifically during early embryogenesis which is composed of Caf1-55, esc, E(z), Su(z)12, Pcl and HDAC1. The Esc/E(z) complex may also associate with Pcl and HDAC1 during early embryogenesis. This complex is distinct from the PRC1 complex, which contains many other PcG proteins like Pc, Ph, Psc, Su(z)2. The 2 complexes however cooperate and interact together during the first 3 hours of development to establish PcG silencing. Interacts with the histone methyltransferase Su(var)3-9. Component of a complex that contains at least HDAC1, CoRest and Su(var)3-3/Hdm. Component of the DREAM complex at least composed of Myb, Caf1-55, mip40, mip120, mip130, E2f2, Dp, Rbf, Rbf2, lin-52, HDAC1 and l(3)mbt. Interacts with the chromatin-remodeler Mi-2. Interacts with Rrp6.

Its subcellular location is the nucleus. The enzyme catalyses N(6)-acetyl-L-lysyl-[histone] + H2O = L-lysyl-[histone] + acetate. Its function is as follows. Catalyzes the deacetylation of lysine residues on the N-terminal part of the core histones (H2A, H2B, H3 and H4). Histone deacetylation may constitute a tag for epigenetic repression and plays an important role in transcriptional regulation, cell cycle progression and developmental events. For instance, deacetylation of histone H3 may be a prerequisite for the subsequent recruitment of the histone methyltransferase Su(var)3-9 to histones. Involved in position-effect variegation (PEV). In the larval brain, part of a regulatory network including the transcriptional repressors klu, dpn and E(spl)mgamma-HLH which is required for type II neuroblast self-renewal and for maintaining erm in an inactive state in intermediate neural progenitors (INP). The sequence is that of Histone deacetylase HDAC1 from Drosophila melanogaster (Fruit fly).